Here is a 668-residue protein sequence, read N- to C-terminus: Golgin subfamily A member 6-like protein 1 (668 aa).

Disordered stretches follow at residues 1-120, 323-356, 384-466, 481-591, and 603-639; these read MLMW…HQEA, IREQ…RQEE, EKMH…EMWR, KEKM…REQE, and EQEE…MRRQ. Residues 15–41 are compositionally biased toward basic residues; it reads LPTHPHLPTHPHLPTHPHLPTHPHLPT. Basic and acidic residues predominate over residues 51-72; that stretch reads MSKETRQSKLAEAKEQLTDHHP. Composition is skewed to polar residues over residues 73–83 and 91–103; these read QTNPSVGTAAS and NNGT…TSGG. Basic and acidic residues predominate over residues 106–120; it reads SPEDEQKASHQHQEA. Positions 177–663 form a coiled coil; the sequence is LEQALSAVAT…EEKMQEHQEH (487 aa).

Belongs to the GOLGA6 family.

The sequence is that of Golgin subfamily A member 6-like protein 1 (GOLGA6L1) from Homo sapiens (Human).